The following is a 531-amino-acid chain: Flavin-containing monooxygenase 3 (531 aa).

FAD is bound by residues 9 to 13, Glu-32, 40 to 41, and 61 to 62; these read GAGVS, LW, and NS. Residues 60-61 and 195-198 contribute to the NADP(+) site; these read TN and SGCD. Residue Ser-401 is modified to Phosphoserine. Residues 511–531 form a helical membrane-spanning segment; it reads YSHFLRLLAVPVLIALFLVLI.

It belongs to the FMO family. Requires FAD as cofactor. In terms of tissue distribution, detected in liver and kidney (at protein level). Expressed in kidney and liver. Weakly expressed in lung. Does not seem to be expressed in brain, adipose tissue, or muscle.

It localises to the microsome membrane. It is found in the endoplasmic reticulum membrane. It carries out the reaction trimethylamine + NADPH + O2 = trimethylamine N-oxide + NADP(+) + H2O. It catalyses the reaction N,N-dimethylaniline + NADPH + O2 + H(+) = N,N-dimethylaniline N-oxide + NADP(+) + H2O. The enzyme catalyses hypotaurine + NADPH + O2 + H(+) = taurine + NADP(+) + H2O. The catalysed reaction is (S)-nicotine + NADPH + O2 = trans-(S)-nicotine N(1')-oxide + NADP(+) + H2O. It carries out the reaction albendazole + NADPH + O2 + H(+) = albendazole S-oxide + NADP(+) + H2O. In terms of biological role, essential hepatic enzyme that catalyzes the oxygenation of a wide variety of nitrogen- and sulfur-containing compounds including drugs as well as dietary compounds. Plays an important role in the metabolism of trimethylamine (TMA), via the production of trimethylamine N-oxide (TMAO) metabolite. TMA is generated by the action of gut microbiota using dietary precursors such as choline, choline containing compounds, betaine or L-carnitine. By regulating TMAO concentration, FMO3 directly impacts both platelet responsiveness and rate of thrombus formation. This is Flavin-containing monooxygenase 3 (Fmo3) from Rattus norvegicus (Rat).